The following is a 357-amino-acid chain: Peptide chain release factor 1 (357 aa).

N5-methylglutamine is present on Gln-234. Residues 284 to 307 (KKQEQRSNDRKQQVGSGDRSERIR) show a composition bias toward basic and acidic residues. The segment at 284–313 (KKQEQRSNDRKQQVGSGDRSERIRTYNFPQ) is disordered.

The protein belongs to the prokaryotic/mitochondrial release factor family. Methylated by PrmC. Methylation increases the termination efficiency of RF1.

It localises to the cytoplasm. In terms of biological role, peptide chain release factor 1 directs the termination of translation in response to the peptide chain termination codons UAG and UAA. This is Peptide chain release factor 1 from Borrelia hermsii (strain HS1 / DAH).